The chain runs to 110 residues: Small ribosomal subunit protein bS16 (110 aa).

Residues 81–104 (VRPAEVLGKQKQEKERSAKKKDAT) show a composition bias toward basic and acidic residues. The interval 81 to 110 (VRPAEVLGKQKQEKERSAKKKDATASETSE) is disordered.

It belongs to the bacterial ribosomal protein bS16 family.

The polypeptide is Small ribosomal subunit protein bS16 (Prochlorococcus marinus (strain NATL1A)).